Here is a 346-residue protein sequence, read N- to C-terminus: Short-wave-sensitive opsin 1 (346 aa).

The Extracellular segment spans residues 1-31 (MSGEDEFYLFQNISSVGPWDGPQYHIAPVWA). Asn12 carries an N-linked (GlcNAc...) asparagine glycan. A helical membrane pass occupies residues 32-56 (FHLQAAFMGFVFFAGTPLNATVLVA). The Cytoplasmic portion of the chain corresponds to 57–68 (TLHYKKLRQPLN). Residues 69-94 (YILVNVSLGGFLFCIFSVFTVFIASC) traverse the membrane as a helical segment. Residues 95-108 (HGYFLFGRHVCALE) lie on the Extracellular side of the membrane. Cys105 and Cys182 are disulfide-bonded. Residues 109–128 (AFLGSVAGLVTGWSLAFLAF) traverse the membrane as a helical segment. Residues 129 to 147 (ERYLVICKPFGNIRFNSKH) are Cytoplasmic-facing. Residues 148-171 (ALTVVLITWTIGIGVSIPPFFGWS) traverse the membrane as a helical segment. Over 172-197 (RFIPEGLQCSCGPDWYTVGTKYRSEH) the chain is Extracellular. The helical transmembrane segment at 198-225 (YTWFLFIFCFIIPLSLICFSYFQLLRTL) threads the bilayer. Residues 226-247 (RAVAAQQQESATTQKAEREVSH) lie on the Cytoplasmic side of the membrane. Residues 248-271 (MVVVMVGSFCLCYVPYAALAMYMV) form a helical membrane-spanning segment. Topologically, residues 272–279 (NNRNHGLY) are extracellular. Residues 280 to 304 (LRLVTIPAFFSKSSCVYNPIIYCFM) traverse the membrane as a helical segment. Lys291 carries the N6-(retinylidene)lysine modification. Residues 305 to 346 (NKQFRACILEMVCRKPMTDESDMSGSQKTEVSTVSSSKVGPH) are Cytoplasmic-facing. The segment at 322–346 (TDESDMSGSQKTEVSTVSSSKVGPH) is disordered. Low complexity predominate over residues 330–346 (SQKTEVSTVSSSKVGPH).

Belongs to the G-protein coupled receptor 1 family. Opsin subfamily. Phosphorylated on some or all of the serine and threonine residues present in the C-terminal region. As to expression, expressed in cone photoreceptor cells.

The protein localises to the cell membrane. It is found in the photoreceptor inner segment. Its subcellular location is the cell projection. The protein resides in the cilium. It localises to the photoreceptor outer segment. The protein localises to the cytoplasm. It is found in the perinuclear region. Its function is as follows. Visual pigments are the light-absorbing molecules that mediate vision. They consist of an apoprotein, opsin, covalently linked to cis-retinal. Required for the maintenance of cone outer segment organization in the ventral retina, but not essential for the maintenance of functioning cone photoreceptors. Involved in ensuring correct abundance and localization of retinal membrane proteins. May increase spectral sensitivity in dim light. This Rattus norvegicus (Rat) protein is Short-wave-sensitive opsin 1 (Opn1sw).